The primary structure comprises 208 residues: Probable nicotinate-nucleotide adenylyltransferase (208 aa).

This sequence belongs to the NadD family.

The enzyme catalyses nicotinate beta-D-ribonucleotide + ATP + H(+) = deamido-NAD(+) + diphosphate. It participates in cofactor biosynthesis; NAD(+) biosynthesis; deamido-NAD(+) from nicotinate D-ribonucleotide: step 1/1. Its function is as follows. Catalyzes the reversible adenylation of nicotinate mononucleotide (NaMN) to nicotinic acid adenine dinucleotide (NaAD). In Trichormus variabilis (strain ATCC 29413 / PCC 7937) (Anabaena variabilis), this protein is Probable nicotinate-nucleotide adenylyltransferase.